Here is a 193-residue protein sequence, read N- to C-terminus: uncharacterized protein (193 aa).

A signal peptide spans 1–22 (MAVQKNVIKGILAGTFALMLSG). A lipid anchor (N-palmitoyl cysteine) is attached at C23. C23 carries the S-diacylglycerol cysteine lipid modification.

It localises to the cell membrane. This is an uncharacterized protein from Escherichia coli (strain K12).